The chain runs to 339 residues: MTFVRNAWYVAALPEELSEKPLGRTILDTPLALYRQPDGVVAALLDICPHRFAPLSDGILVNGHLQCPYHGLEFDGGGQCVHNPHGNGARPASLNVRSFPVVERDALIWIWPGDPALADPGAIPDFGCRVDPAYRTVGGYGHVDCNYKLLVDNLMDLGHAQYVHRANAQTDAFDRLEREVIVGDGEIQALMKIPGGTPSVLMAKFLRGANTPVDAWNDIRWNKVSAMLNFIAVAPEGTPKEQSIHSRGTHILTPETEASCHYFFGSSRNFGIDDPEMDGVLRSWQAQALVKEDKVVVEAIERRRAYVEANGIRPAMLSCDEAAVRVSREIEKLEQLEAA.

The 103-residue stretch at 8-110 (WYVAALPEEL…VVERDALIWI (103 aa)) folds into the Rieske domain. [2Fe-2S] cluster is bound by residues cysteine 48, histidine 50, cysteine 67, and histidine 70. The Fe cation site is built by histidine 159 and histidine 164. Positions 229, 250, and 284 each coordinate 3,6-dichloro-2-methoxybenzoate. Fe cation is bound at residue aspartate 293.

In terms of assembly, homotrimer. The dicamba O-demethylase multicomponent enzyme system is composed of an oxygenase component (DdmC) and an electron transfer component formed by a ferredoxin reductase (DdmA) and a ferredoxin (DdmB). In vitro, dicamba O-demethylase assays in which DdmA2 is substituted for DdmA1 demonstrate that the two enzymes possess nearly identical activities. It depends on [2Fe-2S] cluster as a cofactor.

The enzyme catalyses 3,6-dichloro-2-methoxybenzoate + 2 reduced [2Fe-2S]-[ferredoxin] + O2 + 2 H(+) = 3,6-dichlorosalicylate + formaldehyde + 2 oxidized [2Fe-2S]-[ferredoxin] + H2O. Activity enhanced by Fe(2+) and Mg(2+) ions. Its function is as follows. Component of the dicamba O-demethylase multicomponent enzyme system involved in the degradation of the herbicide dicamba. In vitro, catalyzes the O-demethylation of 2-methoxy-3,6-dichlorobenzoic acid (dicamba) to yield 3,6-dichlorosalicylic acid (DCSA) via an exocyclic monooxygenation. The polypeptide is Dicamba O-demethylase, oxygenase component (Stenotrophomonas maltophilia (Pseudomonas maltophilia)).